The primary structure comprises 985 residues: NAD kinase 2, chloroplastic (985 aa).

A chloroplast-targeting transit peptide spans 1 to 62; the sequence is MFLCFCPCHV…KRRLRFVIRA (62 aa). The calmodulin-binding stretch occupies residues 335–380; that stretch reads APKAEQVELFASIVSDSSKRPIYVHSKEGVWRTSAMVSRWKQYMTR. 2 disordered regions span residues 389 to 466 and 548 to 615; these read SEES…PPGN and FSNG…DEAG. Composition is skewed to basic and acidic residues over residues 390-399 and 413-429; these read EESKRREVSE and VPDE…EVDS. Over residues 548–569 the composition is skewed to polar residues; it reads FSNGNVHASDNTNKSISDNRGN.

This sequence belongs to the NAD kinase family. As to expression, expressed in leaves.

It localises to the plastid. Its subcellular location is the chloroplast. The enzyme catalyses NAD(+) + ATP = ADP + NADP(+) + H(+). Its function is as follows. Involved in chlorophyll synthesis and chloroplast protection against oxidative damage. This is NAD kinase 2, chloroplastic (NADK2) from Arabidopsis thaliana (Mouse-ear cress).